The sequence spans 470 residues: ATP synthase subunit beta (470 aa).

157-164 (GGAGVGKT) provides a ligand contact to ATP.

This sequence belongs to the ATPase alpha/beta chains family. In terms of assembly, F-type ATPases have 2 components, CF(1) - the catalytic core - and CF(0) - the membrane proton channel. CF(1) has five subunits: alpha(3), beta(3), gamma(1), delta(1), epsilon(1). CF(0) has three main subunits: a(1), b(2) and c(9-12). The alpha and beta chains form an alternating ring which encloses part of the gamma chain. CF(1) is attached to CF(0) by a central stalk formed by the gamma and epsilon chains, while a peripheral stalk is formed by the delta and b chains.

The protein localises to the cell inner membrane. The catalysed reaction is ATP + H2O + 4 H(+)(in) = ADP + phosphate + 5 H(+)(out). Functionally, produces ATP from ADP in the presence of a proton gradient across the membrane. The catalytic sites are hosted primarily by the beta subunits. This chain is ATP synthase subunit beta, found in Geobacter sulfurreducens (strain ATCC 51573 / DSM 12127 / PCA).